An 82-amino-acid polypeptide reads, in one-letter code: Turripeptide IX-23 (82 aa).

The first 23 residues, 1–23, serve as a signal peptide directing secretion; that stretch reads MMAKLMITVMMVLLLSLQQGADG. The propeptide occupies 24–50; the sequence is RSERWRKNQMAASSIMRNLITARIDPP. Intrachain disulfides connect Cys53–Cys68, Cys58–Cys72, and Cys64–Cys79.

The protein belongs to the Pg turripeptide superfamily. In terms of tissue distribution, expressed by the venom duct.

The protein localises to the secreted. The sequence is that of Turripeptide IX-23 from Gemmula speciosa (Splendid gem-turris).